The following is a 308-amino-acid chain: Oxygen-dependent coproporphyrinogen-III oxidase (308 aa).

Ser94 contacts substrate. Residues His98 and His108 each coordinate a divalent metal cation. His108 acts as the Proton donor in catalysis. Substrate is bound at residue 110-112; it reads NVR. The a divalent metal cation site is built by His147 and His177. Positions 242-277 are important for dimerization; it reads YVEFNLVWDRGTLFGLQTGGRTESILMSMPPLVRWE. 260–262 serves as a coordination point for substrate; that stretch reads GGR.

The protein belongs to the aerobic coproporphyrinogen-III oxidase family. Homodimer. A divalent metal cation serves as cofactor.

Its subcellular location is the cytoplasm. The enzyme catalyses coproporphyrinogen III + O2 + 2 H(+) = protoporphyrinogen IX + 2 CO2 + 2 H2O. Its pathway is porphyrin-containing compound metabolism; protoporphyrin-IX biosynthesis; protoporphyrinogen-IX from coproporphyrinogen-III (O2 route): step 1/1. In terms of biological role, involved in the heme biosynthesis. Catalyzes the aerobic oxidative decarboxylation of propionate groups of rings A and B of coproporphyrinogen-III to yield the vinyl groups in protoporphyrinogen-IX. The sequence is that of Oxygen-dependent coproporphyrinogen-III oxidase from Yersinia enterocolitica serotype O:8 / biotype 1B (strain NCTC 13174 / 8081).